The primary structure comprises 196 residues: uncharacterized protein (196 aa).

The interval 44–80 is disordered; sequence RSVAVPGTEGKKAQNLRQLPAARLTYPTSSSTRPSHA.

This is an uncharacterized protein from Treponema pallidum (strain Nichols).